The chain runs to 655 residues: Threonine--tRNA ligase (655 aa).

A TGS domain is found at 1–66 (MIDLVFPDGS…TGERKFEILT (66 aa)). Residues 248 to 540 (DHRKLGKTMD…LLENFAGALP (293 aa)) are catalytic. 3 residues coordinate Zn(2+): C340, H391, and H517.

It belongs to the class-II aminoacyl-tRNA synthetase family. In terms of assembly, homodimer. Zn(2+) serves as cofactor.

The protein resides in the cytoplasm. The enzyme catalyses tRNA(Thr) + L-threonine + ATP = L-threonyl-tRNA(Thr) + AMP + diphosphate + H(+). Functionally, catalyzes the attachment of threonine to tRNA(Thr) in a two-step reaction: L-threonine is first activated by ATP to form Thr-AMP and then transferred to the acceptor end of tRNA(Thr). Also edits incorrectly charged L-seryl-tRNA(Thr). The sequence is that of Threonine--tRNA ligase from Caulobacter vibrioides (strain ATCC 19089 / CIP 103742 / CB 15) (Caulobacter crescentus).